Consider the following 147-residue polypeptide: MVHFTAEEKAAITSLWGKMNVEEAGGEALGRLLVVYPWTQRFFDNFGNLSSPSAILGNPKVKAHGKKVLTSFGDAIKNMDNLKTTFAKLSELHCDKLHVDPENFRLLGNVMVIILATHFGKEFTPEVQAAWQKLVSAVAIALGHKYH.

The Globin domain occupies 3–147 (HFTAEEKAAI…VAIALGHKYH (145 aa)). A phosphoserine mark is found at Ser-14 and Ser-51. Residues His-64 and His-93 each coordinate heme b.

This sequence belongs to the globin family. As to quaternary structure, heterotetramer of two alpha chains and two epsilon chains in early embryonic hemoglobin Gower-2; two zeta chains and two epsilon chains in early embryonic hemoglobin Gower-1. As to expression, red blood cells.

Functionally, the epsilon chain is a beta-type chain of early mammalian embryonic hemoglobin. The polypeptide is Hemoglobin subunit epsilon (HBE1) (Alouatta belzebul (Red-handed howler monkey)).